The sequence spans 702 residues: Ribosomal RNA large subunit methyltransferase K/L (702 aa).

A THUMP domain is found at 43–154 (LIYQSLMWSR…KETASIALDL (112 aa)).

This sequence belongs to the methyltransferase superfamily. RlmKL family.

It localises to the cytoplasm. It carries out the reaction guanosine(2445) in 23S rRNA + S-adenosyl-L-methionine = N(2)-methylguanosine(2445) in 23S rRNA + S-adenosyl-L-homocysteine + H(+). The catalysed reaction is guanosine(2069) in 23S rRNA + S-adenosyl-L-methionine = N(2)-methylguanosine(2069) in 23S rRNA + S-adenosyl-L-homocysteine + H(+). Its function is as follows. Specifically methylates the guanine in position 2445 (m2G2445) and the guanine in position 2069 (m7G2069) of 23S rRNA. In Salmonella arizonae (strain ATCC BAA-731 / CDC346-86 / RSK2980), this protein is Ribosomal RNA large subunit methyltransferase K/L.